Consider the following 1334-residue polypeptide: MSEAMDQPAGGPGNPRPGEGDDGSMEPGTCQELLHRLRELEAENSALAQANENQRETYERCLDEVANHVVQALLNQKDLREECIKLKKRVFDLERQNQMLSALFQQKLQLTTGSLPQIPLTPLQPPSEPPASPSLSSTEGPAAPLPLGHCAGQREVCWEQQLRPGGPGPPAAPPPALDALSPFLRKKAQILEVLRALEETDPLLLCSPATPWRPPGQGPGSPEPINGELCGPPQPEPSPWAPCLLLGPGNLGGLLHWERLLGGLGGEEDTGRPWGPSRGPPQAQGTSSGPNCAPGSSSSSSSDEAGDPNEAPSPDTLLGALARRQLNLGQLLEDTESYLQAFLAGAAGPLNGDHPGPGQSSSPDQAPPQLSKSKGLPKSAWGGGTPEAHRPGFGATSEGQGPLPFLSMFMGAGDAPLGSRPGHPHSSSQVKSKLQIGPPSPGEAQGPLLPSPARGLKFLKLPPTSEKSPSPGGPQLSPQLPRNSRIPCRNSGSDGSPSPLLARRGLGGGELSPEGAQGLPTSPSPCYTTPDSTQLRPPQSALSTTLSPGPVVSPCYENILDLSRSTFRGPSPEPPPSPLQVPTYPQLTLEVPQAPEVLRSPGVPPSPCLPESYPYGSPQEKSLDKAGSESPHPGRRTPGNSSKKPSQGSGRRPGDPGSTPLRDRLAALGKLKTGPEGALGSEKNGVPARPGTEKTRGPGKSGESAGDMVPSIHRPLEQLEAKGGIRGAVALGTNSLKQQEPGLMGDPGARVYSSHSMGARVDLEPVSPRSCLTKVELAKSRLAGALCPQVPRTPAKVPTSAPSLGKPNKSPHSSPTKLPSKSPTKVVPRPGAPLVTKESPKPDKGKGPPWADCGSTTAQSTPLVPGPTDPSQGPEGLAPHSAIEEKVMKGIEENVLRLQGQERAPGAEVKHRNTSSIASWFGLKKSKLPALNRRTEATKNKEGAGGGSPLRREVKMEARKLEAESLNISKLMAKAEDLRRALEEEKAYLSSRARPRPGGPAPGPNTGLGQVQGQLAGMYQGADTFMQQLLNRVDGKELPSKSWREPKPEYGDFQPVSSDPKSPWPACGPRNGLVGPLQGCGKPPGKPSSEPGRREEMPSEDSLAEPVPTSHFTACGSLTRTLDSGIGTFPPPDHGSSGTPSKNLPKTKPPRLDPPPGVPPARPPPLTKVPRRAHTLEREVPGIEELLVSGRHPSMPAFPALLPAAPGHRGHETCPDDPCEDPGPTPPVQLAKNWTFPNTRAAGSSSDPLMCPPRQLEGLPRTPMALPVDRKRSQEPSRPSPTPQGPPFGGSRTPSTSDMAEEGRVASGGPPGLETSESLSDSLYDSLSSCGSQG.

Disordered stretches follow at residues 1-28 (MSEAMDQPAGGPGNPRPGEGDDGSMEPG), 115-146 (LPQIPLTPLQPPSEPPASPSLSSTEGPAAPLP), 210-234 (TPWRPPGQGPGSPEPINGELCGPPQ), 266-316 (GEED…SPDT), and 349-711 (PLNG…MVPS). Residues 1–139 (MSEAMDQPAG…PASPSLSSTE (139 aa)) are mediates interaction with CDK5RAP2 and is required for homodimerization and microtubule bundle formation. Residues 28–106 (GTCQELLHRL…NQMLSALFQQ (79 aa)) are a coiled coil. Pro residues predominate over residues 122-132 (PLQPPSEPPAS). The span at 358-372 (GQSSSPDQAPPQLSK) shows a compositional bias: polar residues. Residues Ser-440, Ser-451, Ser-470, and Ser-477 each carry the phosphoserine; by CDK1 modification. Positions 468–481 (SPSPGGPQLSPQLP) are enriched in low complexity. The short motif at 484-487 (SRIP) is the (S/T)X(I/L)P motif 1 element. 3 positions are modified to phosphoserine: Ser-493, Ser-496, and Ser-498. A compositionally biased stretch (polar residues) spans 519–547 (LPTSPSPCYTTPDSTQLRPPQSALSTTLS). 2 positions are modified to phosphoserine; by CDK1: Ser-571 and Ser-577. Residues 638 to 649 (PGNSSKKPSQGS) are compositionally biased toward polar residues. At Thr-659 the chain carries Phosphothreonine. The interval 750–1146 (RVYSSHSMGA…SGTPSKNLPK (397 aa)) is mediates interaction with beta-tubulin and is required for microtubule bundle formation. A Phosphoserine; by CDK1 modification is found at Ser-767. Residues 782–884 (LAGALCPQVP…EGLAPHSAIE (103 aa)) form a disordered region. The segment covering 810–825 (SPHSSPTKLPSKSPTK) has biased composition (low complexity). The (S/T)X(I/L)P motif 2 signature appears at 816 to 819 (TKLP). The short motif at 926–929 (SKLP) is the (S/T)X(I/L)P motif 3; required for interaction with MAPRE1 element. Disordered regions lie at residues 931-953 (LNRRTEATKNKEGAGGGSPLRRE), 986-1015 (KAYLSSRARPRPGGPAPGPNTGLGQVQGQL), and 1030-1183 (LNRV…VPGI). A compositionally biased stretch (basic and acidic residues) spans 933–942 (RRTEATKNKE). Residues 956 to 994 (MEARKLEAESLNISKLMAKAEDLRRALEEEKAYLSSRAR) adopt a coiled-coil conformation. Residues 1033 to 1050 (VDGKELPSKSWREPKPEY) show a composition bias toward basic and acidic residues. The segment covering 1079 to 1090 (GCGKPPGKPSSE) has biased composition (low complexity). A compositionally biased stretch (polar residues) spans 1110 to 1122 (SHFTACGSLTRTL). Residues 1152-1167 (LDPPPGVPPARPPPLT) are compositionally biased toward pro residues. Position 1194 is a phosphoserine (Ser-1194). A compositionally biased stretch (low complexity) spans 1197–1206 (AFPALLPAAP). Residues 1197-1334 (AFPALLPAAP…DSLSSCGSQG (138 aa)) are disordered. A compositionally biased stretch (polar residues) spans 1235-1247 (TFPNTRAAGSSSD). The span at 1313-1334 (LETSESLSDSLYDSLSSCGSQG) shows a compositional bias: low complexity.

Homodimer. Interacts with CDK5RAP2. Interacts with MAPRE1. Interacts with beta-tubulin. CDK1/Cyclin B-dependent phosphorylation mediates its dissociation from centrosomes during mitosis.

It localises to the cytoplasm. It is found in the cytoskeleton. The protein resides in the microtubule organizing center. The protein localises to the centrosome. Functionally, regulates microtubule organization and stabilization. Promotes microtubule growth and bundling formation and stabilizes microtubules by increasing intense acetylation of microtubules. Both tubulin-binding and homodimer formation are required for NCKAP5L-mediated microtubule bundle formation. The sequence is that of Nck-associated protein 5-like from Homo sapiens (Human).